The primary structure comprises 63 residues: DNA-directed RNA polymerase 7 kDa subunit (63 aa).

It belongs to the poxviridae DNA-directed RNA polymerase 7 kDa subunit family. In terms of assembly, the DNA-dependent RNA polymerase (vRNAP) consists of eight subunits encoded by early viral genes and termed according to their apparent molecular masses Rpo147, Rpo132, Rpo35, Rpo30, Rpo22, Rpo19, Rpo18, and Rpo7. The same holoenzyme, with the addition of the transcription-specificity factor RAP94, is used for early gene expression.

Its subcellular location is the virion. The catalysed reaction is RNA(n) + a ribonucleoside 5'-triphosphate = RNA(n+1) + diphosphate. Part of the DNA-dependent RNA polymerase which catalyzes the transcription of viral DNA into RNA using the four ribonucleoside triphosphates as substrates. Responsible for the transcription of early, intermediate and late genes. DNA-dependent RNA polymerase associates with the early transcription factor (ETF), itself composed of OPG118 and OPG134, thereby allowing the early genes transcription. Late transcription, and probably also intermediate transcription, require newly synthesized RNA polymerase. The polypeptide is DNA-directed RNA polymerase 7 kDa subunit (OPG090) (Monkeypox virus).